The following is a 138-amino-acid chain: Putative pre-16S rRNA nuclease (138 aa).

This sequence belongs to the YqgF nuclease family.

The protein localises to the cytoplasm. Functionally, could be a nuclease involved in processing of the 5'-end of pre-16S rRNA. The polypeptide is Putative pre-16S rRNA nuclease (Escherichia coli O45:K1 (strain S88 / ExPEC)).